Reading from the N-terminus, the 352-residue chain is A-type ATP synthase subunit C (352 aa).

The protein belongs to the V-ATPase V0D/AC39 subunit family. In terms of assembly, has multiple subunits with at least A(3), B(3), C, D, E, F, H, I and proteolipid K(x).

It is found in the cell membrane. Component of the A-type ATP synthase that produces ATP from ADP in the presence of a proton gradient across the membrane. This is A-type ATP synthase subunit C from Halobacterium salinarum (strain ATCC 29341 / DSM 671 / R1).